The primary structure comprises 72 residues: UPF0352 protein CGSHiGG_07710 (72 aa).

This sequence belongs to the UPF0352 family.

The sequence is that of UPF0352 protein CGSHiGG_07710 from Haemophilus influenzae (strain PittGG).